The following is a 512-amino-acid chain: 2-isopropylmalate synthase (512 aa).

One can recognise a Pyruvate carboxyltransferase domain in the interval 4 to 266; sequence IQFFDTTLRD…ETNIVLNQFK (263 aa). Residues aspartate 13, histidine 201, histidine 203, and asparagine 237 each coordinate Mn(2+). A regulatory domain region spans residues 390–512; sequence ELKHLQVQYV…SKQADFEEVK (123 aa).

This sequence belongs to the alpha-IPM synthase/homocitrate synthase family. LeuA type 1 subfamily. In terms of assembly, homodimer. It depends on Mn(2+) as a cofactor.

The protein localises to the cytoplasm. It catalyses the reaction 3-methyl-2-oxobutanoate + acetyl-CoA + H2O = (2S)-2-isopropylmalate + CoA + H(+). The protein operates within amino-acid biosynthesis; L-leucine biosynthesis; L-leucine from 3-methyl-2-oxobutanoate: step 1/4. Functionally, catalyzes the condensation of the acetyl group of acetyl-CoA with 3-methyl-2-oxobutanoate (2-ketoisovalerate) to form 3-carboxy-3-hydroxy-4-methylpentanoate (2-isopropylmalate). The protein is 2-isopropylmalate synthase of Listeria monocytogenes serotype 4a (strain HCC23).